Here is a 278-residue protein sequence, read N- to C-terminus: Fe(II)/2-oxoglutarate-dependent dioxygenase nvfI (278 aa).

Belongs to the asaB hydroxylase/desaturase family.

The catalysed reaction is asnovolin A + 2-oxoglutarate + 2 O2 = fumigatonoid A + succinate + CO2. It functions in the pathway secondary metabolite biosynthesis; terpenoid biosynthesis. Functionally, fe(II)/2-oxoglutarate-dependent dioxygenase; part of the gene cluster that mediates the biosynthesis of novofumigatonin, a heavily oxygenated meroterpenoid containing a unique orthoester moiety. The first step of the pathway is the synthesis of 3,5-dimethylorsellinic acid (DMOA) by the polyketide synthase nvfA via condensation of one acetyl-CoA starter unit with 3 malonyl-CoA units and 2 methylations. DMOA is then converted to farnesyl-DMOA by the farnesyltransferase nvfB. Epoxydation by FAD-dependent monooxygenase nvfK, followed by a protonation-initiated cyclization catalyzed by the terpene cyclase nvfL leads to the production of asnavolin H. The short chain dehydrogenase nvfC then as a 3-OH dehydrogenase of asnovolin H to yield chemesin D. There are two branches to synthesize asnovolin A from chemesin D. In one branch, chemesin D undergoes Baeyer-Villiger oxidation by nvfH, methylation by nvfJ, and enoyl reduction by the nvfM D enoylreductase that reduces the double bond between C-5'and C-6', to form respectively asnovolin I, asnovolin K, and asnovolin A. In the other branch, the methylation precedes the Baeyer-Villiger oxidation and the enoyl reduction to yield asnovolin A via the asnovolin J intermediate. Asnovolin A is further converted to fumigatonoid A by the Fe(II)/2-oxoglutarate-dependent dioxygenase nvfI that catalyzes an endoperoxidation reaction. The alpha/beta hydrolase nvfD then acts as an epimerase that converts fumigatonoid A to its C-5' epimer, which then undergoes spontaneous or nvfD-catalyzed lactonization. The following step utilizes the ketoreductase nvfG to produce fumigatonoid B. The dioxygenase nvfE further converts fumigatonoid B into fumigatonoid C. Finally the Fe(II)/2-oxoglutarate-dependent dioxygenase nvfF catalyzes two rounds of oxidation to transform fumigatonoid C into the end product, novofumigatonin A. The protein is Fe(II)/2-oxoglutarate-dependent dioxygenase nvfI of Aspergillus novofumigatus (strain IBT 16806).